The primary structure comprises 452 residues: tRNA modification GTPase MnmE (452 aa).

The (6S)-5-formyl-5,6,7,8-tetrahydrofolate site is built by arginine 21, glutamate 82, and arginine 121. In terms of domain architecture, TrmE-type G spans 214-372 (GARVVLVGRP…LAKTIATTLL (159 aa)). Asparagine 224 is a binding site for K(+). GTP-binding positions include 224–229 (NVGKSS), 243–249 (TPIPGTT), 268–271 (DTAG), and 353–355 (SAR). Serine 228 provides a ligand contact to Mg(2+). Threonine 243, isoleucine 245, and threonine 248 together coordinate K(+). Position 249 (threonine 249) interacts with Mg(2+). (6S)-5-formyl-5,6,7,8-tetrahydrofolate is bound at residue lysine 452.

This sequence belongs to the TRAFAC class TrmE-Era-EngA-EngB-Septin-like GTPase superfamily. TrmE GTPase family. Homodimer. Heterotetramer of two MnmE and two MnmG subunits. Requires K(+) as cofactor.

It localises to the cytoplasm. Functionally, exhibits a very high intrinsic GTPase hydrolysis rate. Involved in the addition of a carboxymethylaminomethyl (cmnm) group at the wobble position (U34) of certain tRNAs, forming tRNA-cmnm(5)s(2)U34. In Chloroflexus aurantiacus (strain ATCC 29366 / DSM 635 / J-10-fl), this protein is tRNA modification GTPase MnmE.